We begin with the raw amino-acid sequence, 415 residues long: Imidazolonepropionase (415 aa).

Residues H80 and H82 each coordinate Fe(3+). 2 residues coordinate Zn(2+): H80 and H82. Residues R89, Y152, and H185 each contribute to the 4-imidazolone-5-propanoate site. Y152 contacts N-formimidoyl-L-glutamate. Fe(3+) is bound at residue H250. H250 serves as a coordination point for Zn(2+). Position 253 (Q253) interacts with 4-imidazolone-5-propanoate. D325 is a binding site for Fe(3+). D325 is a binding site for Zn(2+). N-formimidoyl-L-glutamate contacts are provided by N327 and G329. Position 330 (T330) interacts with 4-imidazolone-5-propanoate.

The protein belongs to the metallo-dependent hydrolases superfamily. HutI family. Zn(2+) is required as a cofactor. Requires Fe(3+) as cofactor.

The protein resides in the cytoplasm. It catalyses the reaction 4-imidazolone-5-propanoate + H2O = N-formimidoyl-L-glutamate. It participates in amino-acid degradation; L-histidine degradation into L-glutamate; N-formimidoyl-L-glutamate from L-histidine: step 3/3. Catalyzes the hydrolytic cleavage of the carbon-nitrogen bond in imidazolone-5-propanoate to yield N-formimidoyl-L-glutamate. It is the third step in the universal histidine degradation pathway. In Rhizobium meliloti (strain 1021) (Ensifer meliloti), this protein is Imidazolonepropionase.